A 486-amino-acid polypeptide reads, in one-letter code: Cardiolipin synthase A (486 aa).

The next 2 helical transmembrane spans lie at 3 to 23 (TFYTVISWLLVFGYWLLIAGV) and 38 to 58 (MAWLLVIYILPLVGIVAYLSF). PLD phosphodiesterase domains follow at residues 219–246 (MDLRQHRKIILIDNRIAYTGSMNMVDPR) and 399–426 (KDGLLHTKSVLVDGQLSLVGTVNLDMRS). Residues histidine 224, lysine 226, aspartate 231, histidine 404, lysine 406, and aspartate 411 contribute to the active site.

It belongs to the phospholipase D family. Cardiolipin synthase subfamily. ClsA sub-subfamily.

It localises to the cell inner membrane. The catalysed reaction is 2 a 1,2-diacyl-sn-glycero-3-phospho-(1'-sn-glycerol) = a cardiolipin + glycerol. Functionally, catalyzes the reversible phosphatidyl group transfer from one phosphatidylglycerol molecule to another to form cardiolipin (CL) (diphosphatidylglycerol) and glycerol. This chain is Cardiolipin synthase A, found in Pectobacterium carotovorum subsp. carotovorum (strain PC1).